A 228-amino-acid polypeptide reads, in one-letter code: Cytochrome c oxidase subunit 2 (228 aa).

At 1 to 26 (MATWNNLNLQNGASPLMEQIIFFHDH) the chain is on the mitochondrial intermembrane side. Residues 27 to 48 (TLIILIMITILVGYLMINLFFN) form a helical membrane-spanning segment. Residues 49 to 62 (KYINRFLLEGQMIE) lie on the Mitochondrial matrix side of the membrane. A helical transmembrane segment spans residues 63-82 (LIWTILPAITLIFIALPSLR). Over 83-228 (LLYLLDELNN…FIKWINNYSS (146 aa)) the chain is Mitochondrial intermembrane. Residues histidine 161, cysteine 196, glutamate 198, cysteine 200, histidine 204, and methionine 207 each contribute to the Cu cation site. Glutamate 198 contributes to the Mg(2+) binding site.

The protein belongs to the cytochrome c oxidase subunit 2 family. In terms of assembly, component of the cytochrome c oxidase (complex IV, CIV), a multisubunit enzyme composed of a catalytic core of 3 subunits and several supernumerary subunits. The complex exists as a monomer or a dimer and forms supercomplexes (SCs) in the inner mitochondrial membrane with ubiquinol-cytochrome c oxidoreductase (cytochrome b-c1 complex, complex III, CIII). The cofactor is Cu cation.

It is found in the mitochondrion inner membrane. It catalyses the reaction 4 Fe(II)-[cytochrome c] + O2 + 8 H(+)(in) = 4 Fe(III)-[cytochrome c] + 2 H2O + 4 H(+)(out). In terms of biological role, component of the cytochrome c oxidase, the last enzyme in the mitochondrial electron transport chain which drives oxidative phosphorylation. The respiratory chain contains 3 multisubunit complexes succinate dehydrogenase (complex II, CII), ubiquinol-cytochrome c oxidoreductase (cytochrome b-c1 complex, complex III, CIII) and cytochrome c oxidase (complex IV, CIV), that cooperate to transfer electrons derived from NADH and succinate to molecular oxygen, creating an electrochemical gradient over the inner membrane that drives transmembrane transport and the ATP synthase. Cytochrome c oxidase is the component of the respiratory chain that catalyzes the reduction of oxygen to water. Electrons originating from reduced cytochrome c in the intermembrane space (IMS) are transferred via the dinuclear copper A center (CU(A)) of subunit 2 and heme A of subunit 1 to the active site in subunit 1, a binuclear center (BNC) formed by heme A3 and copper B (CU(B)). The BNC reduces molecular oxygen to 2 water molecules using 4 electrons from cytochrome c in the IMS and 4 protons from the mitochondrial matrix. This is Cytochrome c oxidase subunit 2 (COII) from Yponomeuta malinellus (European small ermine moth).